A 141-amino-acid polypeptide reads, in one-letter code: Nucleoside diphosphate kinase (141 aa).

6 residues coordinate ATP: lysine 11, phenylalanine 59, arginine 87, threonine 93, arginine 104, and asparagine 114. Histidine 117 acts as the Pros-phosphohistidine intermediate in catalysis.

It belongs to the NDK family. As to quaternary structure, homotetramer. The cofactor is Mg(2+).

It localises to the cytoplasm. The catalysed reaction is a 2'-deoxyribonucleoside 5'-diphosphate + ATP = a 2'-deoxyribonucleoside 5'-triphosphate + ADP. It carries out the reaction a ribonucleoside 5'-diphosphate + ATP = a ribonucleoside 5'-triphosphate + ADP. In terms of biological role, major role in the synthesis of nucleoside triphosphates other than ATP. The ATP gamma phosphate is transferred to the NDP beta phosphate via a ping-pong mechanism, using a phosphorylated active-site intermediate. This chain is Nucleoside diphosphate kinase, found in Bordetella avium (strain 197N).